Consider the following 216-residue polypeptide: Cytochrome c-type protein Cgr1 (216 aa).

The helical transmembrane segment at W18 to V38 threads the bilayer. Heme-binding residues include C46, C50, H51, C95, C98, H99, C142, C147, H148, C176, C179, H180, C190, C193, and H194.

It belongs to the multiheme cytochrome c family. As to quaternary structure, may form a membrane-associated complex with Cgr2. Post-translationally, binds 5 heme groups per subunit.

It localises to the cell membrane. Functionally, probably transfers electrons from a membrane-associated electron donor (e.g. the membrane quinone pool) to the [4Fe-4S] cluster of the Cgr2 reductase via its covalently bound heme groups. In Eggerthella lenta (strain ATCC 25559 / DSM 2243 / CCUG 17323 / JCM 9979 / KCTC 3265 / NCTC 11813 / VPI 0255 / 1899 B) (Eubacterium lentum), this protein is Cytochrome c-type protein Cgr1.